A 72-amino-acid chain; its full sequence is Cell division protein ZapB (72 aa).

A coiled-coil region spans residues 1 to 71 (MSLEILDQLE…LRSLLGRIDN (71 aa)). The tract at residues 36–56 (LSRQTNEQLRSENEHLKTEHH) is disordered. The segment covering 44 to 56 (LRSENEHLKTEHH) has biased composition (basic and acidic residues).

Belongs to the ZapB family. As to quaternary structure, homodimer. The ends of the coiled-coil dimer bind to each other, forming polymers. Interacts with FtsZ.

It is found in the cytoplasm. In terms of biological role, non-essential, abundant cell division factor that is required for proper Z-ring formation. It is recruited early to the divisome by direct interaction with FtsZ, stimulating Z-ring assembly and thereby promoting cell division earlier in the cell cycle. Its recruitment to the Z-ring requires functional FtsA or ZipA. This is Cell division protein ZapB from Histophilus somni (strain 129Pt) (Haemophilus somnus).